A 725-amino-acid polypeptide reads, in one-letter code: Peroxisomal fatty acid beta-oxidation multifunctional protein MFP2 (725 aa).

The active-site Nucleophile is glutamate 119. Glutamate 139 functions as the Proton acceptor in the catalytic mechanism. The short motif at 723-725 (SRL) is the Microbody targeting signal element.

This sequence in the N-terminal section; belongs to the enoyl-CoA hydratase/isomerase family. In the central section; belongs to the 3-hydroxyacyl-CoA dehydrogenase family. In terms of tissue distribution, highly expressed in senescing leaves and at lower levels in flowers and siliques.

The protein resides in the glyoxysome. The protein localises to the peroxisome. The enzyme catalyses a (3S)-3-hydroxyacyl-CoA = a (2E)-enoyl-CoA + H2O. It carries out the reaction a 4-saturated-(3S)-3-hydroxyacyl-CoA = a (3E)-enoyl-CoA + H2O. The catalysed reaction is (3S)-3-hydroxybutanoyl-CoA = (2E)-butenoyl-CoA + H2O. It catalyses the reaction (3S)-hydroxyoctanoyl-CoA = (2E)-octenoyl-CoA + H2O. The enzyme catalyses (3S)-3-hydroxydodecanoyl-CoA = (2E)-dodecenoyl-CoA + H2O. It carries out the reaction (3S)-hydroxytetradecanoyl-CoA = (2E)-tetradecenoyl-CoA + H2O. The catalysed reaction is (3S)-hydroxyhexanoyl-CoA = (2E)-hexenoyl-CoA + H2O. It catalyses the reaction a (3Z)-enoyl-CoA = a 4-saturated (2E)-enoyl-CoA. The enzyme catalyses a (3E)-enoyl-CoA = a 4-saturated (2E)-enoyl-CoA. It carries out the reaction (3S)-3-hydroxybutanoyl-CoA = (3R)-3-hydroxybutanoyl-CoA. The catalysed reaction is a (3S)-3-hydroxyacyl-CoA + NAD(+) = a 3-oxoacyl-CoA + NADH + H(+). It catalyses the reaction (3S)-3-hydroxybutanoyl-CoA + NAD(+) = acetoacetyl-CoA + NADH + H(+). The enzyme catalyses (3S)-hydroxyhexanoyl-CoA + NAD(+) = 3-oxohexanoyl-CoA + NADH + H(+). It carries out the reaction (3S)-hydroxyoctanoyl-CoA + NAD(+) = 3-oxooctanoyl-CoA + NADH + H(+). The catalysed reaction is (3S)-3-hydroxydodecanoyl-CoA + NAD(+) = 3-oxododecanoyl-CoA + NADH + H(+). It catalyses the reaction (3S)-hydroxytetradecanoyl-CoA + NAD(+) = 3-oxotetradecanoyl-CoA + NADH + H(+). It functions in the pathway lipid metabolism; fatty acid beta-oxidation. In terms of biological role, involved in peroxisomal fatty acid beta-oxidation during seed germination. Possesses enoyl-CoA hydratase activity against long chain substrates (C14-C18) and 3-hydroxyacyl-CoA dehydrogenase activity against chains of variable sizes (C6-C18). Possesses 3-hydroxy-3-phenylpropionyl-CoA dehydrogenase activity and is involved in the peroxisomal beta-oxidation pathway for the biosynthesis of benzoic acid (BA). Required for the accumulation in seeds of substituted hydroxybenzoylated choline esters, which are BA-containing secondary metabolites. Fatty acid beta-oxidation pathway in peroxisomes regulates gene silencing, histone acetylation and DNA methylation. The polypeptide is Peroxisomal fatty acid beta-oxidation multifunctional protein MFP2 (Arabidopsis thaliana (Mouse-ear cress)).